A 316-amino-acid chain; its full sequence is MTVGSPAVVIGILLSTVIVAAWLIWVERRMIGIWQDRLGPNRVGPLGLGQVVADMVKIFFKEDWIPPFADKPVFVIAPAIVMVTMLLGFVVVPFAPGVGVIDFNFGLLYFFALSSLAVYSQVLAGYASNNKYSLLGSLRAAAQSISYEVFMGLAAMGVVMLAGSFNLREIVEAQKDGWYVLPQFAGFLAFLVAAVAECHRAPFDLPEAEQEITGGFHTEYSGMKFGMFFVGEYLGITLNSAILVTLFFGGWLGPAFLPPLAWFILKTLVFILFFILLRAALARPRYDQLMSFGWKVMLPLTLANIVVTGAVGLSVP.

8 consecutive transmembrane segments (helical) span residues 6-26, 74-94, 98-118, 145-165, 177-197, 233-253, 256-276, and 296-316; these read PAVVIGILLSTVIVAAWLIWV, FVIAPAIVMVTMLLGFVVVPF, VGVIDFNFGLLYFFALSSLAV, ISYEVFMGLAAMGVVMLAGSF, GWYVLPQFAGFLAFLVAAVAE, YLGITLNSAILVTLFFGGWLG, FLPPLAWFILKTLVFILFFIL, and VMLPLTLANIVVTGAVGLSVP.

Belongs to the complex I subunit 1 family. NDH-1 is composed of 14 different subunits. Subunits NuoA, H, J, K, L, M, N constitute the membrane sector of the complex.

It localises to the cell inner membrane. The enzyme catalyses a quinone + NADH + 5 H(+)(in) = a quinol + NAD(+) + 4 H(+)(out). Its function is as follows. NDH-1 shuttles electrons from NADH, via FMN and iron-sulfur (Fe-S) centers, to quinones in the respiratory chain. The immediate electron acceptor for the enzyme in this species is believed to be ubiquinone. Couples the redox reaction to proton translocation (for every two electrons transferred, four hydrogen ions are translocated across the cytoplasmic membrane), and thus conserves the redox energy in a proton gradient. This subunit may bind ubiquinone. The chain is NADH-quinone oxidoreductase subunit H from Methylococcus capsulatus (strain ATCC 33009 / NCIMB 11132 / Bath).